The following is a 197-amino-acid chain: uncharacterized protein (197 aa).

This is an uncharacterized protein from Acanthamoeba polyphaga (Amoeba).